We begin with the raw amino-acid sequence, 139 residues long: GSK3B-interacting protein (139 aa).

The interval 41 to 45 is required for PRKAR2A interaction; contributes to a protective effect against H(2)O(2)-induced apoptosis; sequence VNDVL. Positions 115–139 are interaction with GSK3B and acts as a GSK3B inhibitor; it reads SPAYREAFGNALLQRLEALKREGQS.

This sequence belongs to the GSKIP family. Forms a complex composed of PRKAR2A or PRKAR2B, GSK3B and GSKIP through GSKIP interaction; facilitates PKA-induced phosphorylation of GSK3B leading to GSK3B inactivation; recruits DNM1L through GSK3B for PKA-mediated phosphorylation of DNM1L; promotes beta-catenin degradation through GSK3B-induced phosphorylation of beta-catenin; stabilizes beta-catenin and enhances Wnt-induced signaling through PKA-induced phosphorylation of beta-catenin. Interacts with GSK3B; induces GSK3B-mediated phosphorylation of GSKIP and inhibits GSK3B kinase activity. Post-translationally, phosphorylated by GSK3B.

It is found in the cytoplasm. Its subcellular location is the nucleus. Its function is as follows. A-kinase anchoring protein for GSK3B and PKA that regulates or facilitates their kinase activity towards their targets. The ternary complex enhances Wnt-induced signaling by facilitating the GSK3B- and PKA-induced phosphorylation of beta-catenin leading to beta-catenin degradation and stabilization respectively. Upon cAMP activation, the ternary complex contributes to neuroprotection against oxidative stress-induced apoptosis by facilitating the PKA-induced phosphorylation of DML1 and PKA-induced inactivation of GSK3B. During neurite outgrowth promotes neuron proliferation; while increases beta-catenin-induced transcriptional activity through GSK3B kinase activity inhibition, reduces N-cadherin level to promote cell cycle progression. May play a role in cleft palate formation and is required for postnatal life through modulation of the activity of GSK3B during development. This is GSK3B-interacting protein from Bos taurus (Bovine).